Here is a 666-residue protein sequence, read N- to C-terminus: MKQYAIQPATLEFNAEGTPVSRDFDDVYFSNDNGLEETRYVFLGGNRLAERFPVHSHPLFIVAESGFGTGLNFLTLWQAFDSFRSAHPQATLQRLHFISFEKFPLTRDDLALAHQHWPELAPWAEQLQAQWPLPLPGCHRLLLDRSRVTLDLWFGDINELTDQLDATLNQTVDAWFLDGFAPAKNPDMWTPNLFNAMARLARPGATLATFTSAGFVRRGLQEAGFTMQKRKGFGRKREMLCGVMEQHLMPTLYAPWFYRSGSEKRETAIIGGGIASALLSLALLRRGWQVTLYCADDQPAQGASGNRQGALYPLLSKHDAAINRFFPTAFTFARRLYDALPVSFDHDWCGVTQLGWDEKSQQKIAQMLSLALPAELASALNAEEAEQAVGVTTRCGGITYPAGGWLCPEQLTRAVIALATEQGLQTRFRHTLTSLVAQESRWQLRFMSGETASHETVVLANGHQINRFDQTRPLPVYAVGGQVSHIPTTPALSALRQVLCYDGYLTPQNPHNQQHCIGASYHRGDESTVWREEDQRQNRQRLLDCFPDAKWATEVDVSGNSARCGVRCATRDHLPMVGNVPDYHATLTHYADLADNKTSAAPAPVYPGLFVLGALGSRGLCSAPLCAEILAAQMSNEPIPLDAGTLAALNPNRLWVRKLLKGKAVK.

Residues 1-245 (MKQYAIQPAT…KREMLCGVME (245 aa)) are tRNA (mnm(5)s(2)U34)-methyltransferase. Residues 270–666 (IGGGIASALL…RKLLKGKAVK (397 aa)) are FAD-dependent cmnm(5)s(2)U34 oxidoreductase.

The protein in the N-terminal section; belongs to the methyltransferase superfamily. tRNA (mnm(5)s(2)U34)-methyltransferase family. In the C-terminal section; belongs to the DAO family. FAD is required as a cofactor.

The protein resides in the cytoplasm. The catalysed reaction is 5-aminomethyl-2-thiouridine(34) in tRNA + S-adenosyl-L-methionine = 5-methylaminomethyl-2-thiouridine(34) in tRNA + S-adenosyl-L-homocysteine + H(+). Functionally, catalyzes the last two steps in the biosynthesis of 5-methylaminomethyl-2-thiouridine (mnm(5)s(2)U) at the wobble position (U34) in tRNA. Catalyzes the FAD-dependent demodification of cmnm(5)s(2)U34 to nm(5)s(2)U34, followed by the transfer of a methyl group from S-adenosyl-L-methionine to nm(5)s(2)U34, to form mnm(5)s(2)U34. This chain is tRNA 5-methylaminomethyl-2-thiouridine biosynthesis bifunctional protein MnmC, found in Salmonella choleraesuis (strain SC-B67).